A 245-amino-acid polypeptide reads, in one-letter code: MSQSKFALPRNGFTFKRFFVAHDRCAMKVGTDGILLGAWAPIAGVKHVLDIGAGSGLLALMLAQRTGDDVHVEAVELDEEAAAQARENALASPWASRIEVWQADIHQWQPSQTRRYELIISNPPFFAEGVPCATSQREQARYTTTLDHASLLTCAAEHITEEGFFCVVLPVDIGNAFIERARAMGWHLRLRTDVAETELRPPHRVLLAFSPTAGECFSDRLAIRGPEQQYSEGFTALTEDFYLFM.

This sequence belongs to the methyltransferase superfamily. tRNA (adenine-N(6)-)-methyltransferase family.

The protein resides in the cytoplasm. The enzyme catalyses adenosine(37) in tRNA1(Val) + S-adenosyl-L-methionine = N(6)-methyladenosine(37) in tRNA1(Val) + S-adenosyl-L-homocysteine + H(+). In terms of biological role, specifically methylates the adenine in position 37 of tRNA(1)(Val) (anticodon cmo5UAC). The polypeptide is tRNA1(Val) (adenine(37)-N6)-methyltransferase (Klebsiella pneumoniae subsp. pneumoniae (strain ATCC 700721 / MGH 78578)).